The following is a 340-amino-acid chain: Phosphoribosylformylglycinamidine cyclo-ligase (340 aa).

Belongs to the AIR synthase family.

The protein resides in the cytoplasm. The enzyme catalyses 2-formamido-N(1)-(5-O-phospho-beta-D-ribosyl)acetamidine + ATP = 5-amino-1-(5-phospho-beta-D-ribosyl)imidazole + ADP + phosphate + H(+). Its pathway is purine metabolism; IMP biosynthesis via de novo pathway; 5-amino-1-(5-phospho-D-ribosyl)imidazole from N(2)-formyl-N(1)-(5-phospho-D-ribosyl)glycinamide: step 2/2. The polypeptide is Phosphoribosylformylglycinamidine cyclo-ligase (Streptococcus sanguinis (strain SK36)).